Here is a 272-residue protein sequence, read N- to C-terminus: Formamidopyrimidine-DNA glycosylase (272 aa).

Pro-2 serves as the catalytic Schiff-base intermediate with DNA. The active-site Proton donor is the Glu-3. Residue Lys-58 is the Proton donor; for beta-elimination activity of the active site. DNA is bound by residues His-92, Arg-111, and Arg-153. The segment at 238–272 adopts an FPG-type zinc-finger fold; the sequence is NVYGRGGEPCPVCAKPLTEKPLSQRTTVYCTHCQN. The active-site Proton donor; for delta-elimination activity is Arg-262.

This sequence belongs to the FPG family. As to quaternary structure, monomer. The cofactor is Zn(2+).

It carries out the reaction Hydrolysis of DNA containing ring-opened 7-methylguanine residues, releasing 2,6-diamino-4-hydroxy-5-(N-methyl)formamidopyrimidine.. The enzyme catalyses 2'-deoxyribonucleotide-(2'-deoxyribose 5'-phosphate)-2'-deoxyribonucleotide-DNA = a 3'-end 2'-deoxyribonucleotide-(2,3-dehydro-2,3-deoxyribose 5'-phosphate)-DNA + a 5'-end 5'-phospho-2'-deoxyribonucleoside-DNA + H(+). Its function is as follows. Involved in base excision repair of DNA damaged by oxidation or by mutagenic agents. Acts as a DNA glycosylase that recognizes and removes damaged bases. Has a preference for oxidized purines, such as 7,8-dihydro-8-oxoguanine (8-oxoG). Has AP (apurinic/apyrimidinic) lyase activity and introduces nicks in the DNA strand. Cleaves the DNA backbone by beta-delta elimination to generate a single-strand break at the site of the removed base with both 3'- and 5'-phosphates. The polypeptide is Formamidopyrimidine-DNA glycosylase (Teredinibacter turnerae (strain ATCC 39867 / T7901)).